The chain runs to 262 residues: Snake venom serine protease (262 aa).

The N-terminal stretch at 1 to 18 is a signal peptide; the sequence is MVLIRVLANLLILQLSYA. Positions 19-24 are excised as a propeptide; it reads QKSSEL. In terms of domain architecture, Peptidase S1 spans 25–253; sequence VIGGDECNIN…YTEWIQSIIA (229 aa). 6 disulfide bridges follow: Cys31–Cys167, Cys50–Cys66, Cys102–Cys260, Cys146–Cys214, Cys178–Cys193, and Cys204–Cys229. Residues His65 and Asp114 each act as charge relay system in the active site. 2 N-linked (GlcNAc...) asparagine glycosylation sites follow: Asn125 and Asn158. Catalysis depends on Ser208, which acts as the Charge relay system.

The protein belongs to the peptidase S1 family. Snake venom subfamily. Monomer. In terms of tissue distribution, expressed by the venom gland.

Its subcellular location is the secreted. Snake venom serine protease that may act in the hemostasis system of the prey. In Crotalus durissus durissus (Central American rattlesnake), this protein is Snake venom serine protease.